Here is a 118-residue protein sequence, read N- to C-terminus: MIKIILISLALIFVIIGALISALAAIGLLRLEDVYSRAHAAGKASTLGAMSLLFGTFLYFIATQGFVNMQLIVAIIFVLITGPLSSHMIMKAAYNIKTPYTKKTKVDEISEDLKDTKL.

3 helical membrane passes run 4-24 (IILI…SALA), 38-58 (AHAA…GTFL), and 60-80 (FIAT…FVLI).

Belongs to the CPA3 antiporters (TC 2.A.63) subunit G family. In terms of assembly, may form a heterooligomeric complex that consists of seven subunits: mnhA1, mnhB1, mnhC1, mnhD1, mnhE1, mnhF1 and mnhG1.

The protein localises to the cell membrane. Its function is as follows. Mnh complex is a Na(+)/H(+) antiporter involved in Na(+) excretion. The sequence is that of Na(+)/H(+) antiporter subunit G1 (mnhG1) from Staphylococcus aureus (strain Mu3 / ATCC 700698).